The chain runs to 434 residues: Putative nuclease OPG089 (434 aa).

Mg(2+)-binding residues include Asp-33, Asp-74, Glu-168, Asp-170, Asp-196, and Asp-198.

Belongs to the XPG/RAD2 endonuclease family. FEN1 subfamily. The cofactor is Mg(2+).

It localises to the virion. In terms of biological role, putative nuclease that seems to be required for double-strand break repair, homologous recombination, and production of full-length viral genomic DNA. This Homo sapiens (Human) protein is Putative nuclease OPG089 (OPG089).